The following is a 147-amino-acid chain: Large ribosomal subunit protein uL15 (147 aa).

The segment at 1–62 (MDLSNLRPAI…GQMPLQRRLP (62 aa)) is disordered. 2 stretches are compositionally biased toward gly residues: residues 21–31 (RGPGSGNGKTA) and 42–52 (SGGGVKPGFEG).

It belongs to the universal ribosomal protein uL15 family. Part of the 50S ribosomal subunit.

Binds to the 23S rRNA. The sequence is that of Large ribosomal subunit protein uL15 from Syntrophotalea carbinolica (strain DSM 2380 / NBRC 103641 / GraBd1) (Pelobacter carbinolicus).